We begin with the raw amino-acid sequence, 111 residues long: Large ribosomal subunit protein uL22 (111 aa).

Belongs to the universal ribosomal protein uL22 family. In terms of assembly, part of the 50S ribosomal subunit.

Functionally, this protein binds specifically to 23S rRNA; its binding is stimulated by other ribosomal proteins, e.g. L4, L17, and L20. It is important during the early stages of 50S assembly. It makes multiple contacts with different domains of the 23S rRNA in the assembled 50S subunit and ribosome. The globular domain of the protein is located near the polypeptide exit tunnel on the outside of the subunit, while an extended beta-hairpin is found that lines the wall of the exit tunnel in the center of the 70S ribosome. This is Large ribosomal subunit protein uL22 from Chlamydia abortus (strain DSM 27085 / S26/3) (Chlamydophila abortus).